Reading from the N-terminus, the 78-residue chain is Large ribosomal subunit protein uL23 (78 aa).

This sequence belongs to the universal ribosomal protein uL23 family. Part of the 50S ribosomal subunit. Contacts protein L29.

Binds to 23S rRNA. One of the proteins that surrounds the polypeptide exit tunnel on the outside of the ribosome. The sequence is that of Large ribosomal subunit protein uL23 from Nanoarchaeum equitans (strain Kin4-M).